Consider the following 227-residue polypeptide: PKHD-type hydroxylase ABSDF3031 (227 aa).

Positions 78 to 178 constitute a Fe2OG dioxygenase domain; that stretch reads KIIPPLFNRY…RFASFFWVQS (101 aa). Fe cation-binding residues include His96, Asp98, and His159. Arg169 serves as a coordination point for 2-oxoglutarate.

Fe(2+) serves as cofactor. It depends on L-ascorbate as a cofactor.

This is PKHD-type hydroxylase ABSDF3031 from Acinetobacter baumannii (strain SDF).